The sequence spans 685 residues: Translation initiation factor IF-2 (685 aa).

The tr-type G domain occupies 185 to 354; the sequence is KRPPVVTVMG…LLTAEMQELK (170 aa). Residues 194 to 201 are G1; the sequence is GHVDHGKT. 194–201 contributes to the GTP binding site; sequence GHVDHGKT. The tract at residues 219–223 is G2; that stretch reads GITQH. The segment at 240-243 is G3; that stretch reads DTPG. Residues 240 to 244 and 294 to 297 contribute to the GTP site; these read DTPGH and NKMD. The interval 294–297 is G4; the sequence is NKMD. The segment at 330 to 332 is G5; that stretch reads SAH.

This sequence belongs to the TRAFAC class translation factor GTPase superfamily. Classic translation factor GTPase family. IF-2 subfamily.

It is found in the cytoplasm. Its function is as follows. One of the essential components for the initiation of protein synthesis. Protects formylmethionyl-tRNA from spontaneous hydrolysis and promotes its binding to the 30S ribosomal subunits. Also involved in the hydrolysis of GTP during the formation of the 70S ribosomal complex. The sequence is that of Translation initiation factor IF-2 from Clostridium tetani (strain Massachusetts / E88).